The sequence spans 508 residues: Photosystem II CP47 reaction center protein (508 aa).

A run of 6 helical transmembrane segments spans residues 21–36 (AVHI…WAGS), 101–115 (IVFS…IWHW), 140–156 (GIHL…FGTF), 203–218 (IAAG…FHLS), 237–252 (VLSS…AFVV), and 457–472 (SFAL…HGAR).

This sequence belongs to the PsbB/PsbC family. PsbB subfamily. As to quaternary structure, PSII is composed of 1 copy each of membrane proteins PsbA, PsbB, PsbC, PsbD, PsbE, PsbF, PsbH, PsbI, PsbJ, PsbK, PsbL, PsbM, PsbT, PsbX, PsbY, PsbZ, Psb30/Ycf12, at least 3 peripheral proteins of the oxygen-evolving complex and a large number of cofactors. It forms dimeric complexes. Binds multiple chlorophylls. PSII binds additional chlorophylls, carotenoids and specific lipids. is required as a cofactor.

The protein resides in the plastid. Its subcellular location is the chloroplast thylakoid membrane. In terms of biological role, one of the components of the core complex of photosystem II (PSII). It binds chlorophyll and helps catalyze the primary light-induced photochemical processes of PSII. PSII is a light-driven water:plastoquinone oxidoreductase, using light energy to abstract electrons from H(2)O, generating O(2) and a proton gradient subsequently used for ATP formation. The sequence is that of Photosystem II CP47 reaction center protein from Citrus sinensis (Sweet orange).